We begin with the raw amino-acid sequence, 216 residues long: uncharacterized protein (216 aa).

This is an uncharacterized protein from Treponema pallidum (strain Nichols).